Consider the following 634-residue polypeptide: Kelch-like protein 22 (634 aa).

Alanine 2 is modified (N-acetylalanine). The BTB domain occupies 50–117 (FDVVLVVEGR…IYTSELELSL (68 aa)). Kelch repeat units lie at residues 299 to 349 (CVVG…VLNN), 350 to 399 (FVYL…VVGR), 400 to 446 (YIYA…TLEG), 448 to 493 (MYVT…TLLD), 494 to 544 (KLYV…VLDT), and 545 to 593 (RIYV…VLTL). Residue threonine 463 is modified to Phosphothreonine. The residue at position 466 (tyrosine 466) is a Phosphotyrosine. A disordered region spans residues 600-634 (EPPRGTPDRSQADPDFASEVMSVSDWEEFDNSSED). Phosphothreonine is present on threonine 605. The segment covering 624–634 (DWEEFDNSSED) has biased composition (acidic residues).

As to quaternary structure, component of the BCR(KLHL22) E3 ubiquitin ligase complex, at least composed of CUL3, KLHL22 and RBX1. Interacts with PLK1. Interacts with DEPDC5 (via DEP domain); the interaction depends on amino acid availability. Interacts with YWHAE; required for the nuclear localization of KLHL22 upon amino acid starvation.

Its subcellular location is the cytoplasm. It localises to the cytosol. The protein resides in the cytoskeleton. It is found in the microtubule organizing center. The protein localises to the centrosome. Its subcellular location is the spindle. It localises to the nucleus. The protein resides in the lysosome. Its pathway is protein modification; protein ubiquitination. Substrate-specific adapter of a BCR (BTB-CUL3-RBX1) E3 ubiquitin ligase complex required for chromosome alignment and localization of PLK1 at kinetochores. The BCR(KLHL22) ubiquitin ligase complex mediates monoubiquitination of PLK1, leading to PLK1 dissociation from phosphoreceptor proteins and subsequent removal from kinetochores, allowing silencing of the spindle assembly checkpoint (SAC) and chromosome segregation. Monoubiquitination of PLK1 does not lead to PLK1 degradation. The BCR(KLHL22) ubiquitin ligase complex is also responsible for the amino acid-stimulated 'Lys-48' polyubiquitination and proteasomal degradation of DEPDC5. Through the degradation of DEPDC5, releases the GATOR1 complex-mediated inhibition of the TORC1 pathway. It is therefore an amino acid-dependent activator within the amino acid-sensing branch of the TORC1 pathway, indirectly regulating different cellular processes including cell growth and autophagy. The sequence is that of Kelch-like protein 22 (KLHL22) from Ailuropoda melanoleuca (Giant panda).